A 688-amino-acid chain; its full sequence is GTPase IMAP family member 8 (688 aa).

The segment covering 1-14 (MATSSHQGAAAGSQ) has biased composition (low complexity). The segment at 1–42 (MATSSHQGAAAGSQAEHRSCEASVGQGERPSASQGQEGNFKQ) is disordered. Polar residues predominate over residues 31–42 (SASQGQEGNFKQ). 3 AIG1-type G domains span residues 46 to 247 (TSTL…MESS), 282 to 472 (MPEL…VIRE), and 473 to 677 (KELL…GQLK). The G1 stretch occupies residues 55-62 (GKQGAGKS). Residues 55-63 (GKQGAGKSA) and Ser76 contribute to the GTP site. A G2 region spans residues 82 to 86 (MVTDR). The interval 103 to 106 (DTPD) is G3. The segment at 172 to 175 (TRED) is G4. GTP is bound by residues 173-175 (RED) and Asn209. The G5 stretch occupies residues 208 to 210 (NNK).

This sequence belongs to the TRAFAC class TrmE-Era-EngA-EngB-Septin-like GTPase superfamily. AIG1/Toc34/Toc159-like paraseptin GTPase family. IAN subfamily. Abundantly expressed in the thymus (in thymocytes), spleen (in splenocytes), lymph node, followed by bone marrow and lung.

It is found in the endoplasmic reticulum. The protein resides in the golgi apparatus. Its subcellular location is the mitochondrion. The protein localises to the cytoplasm. It localises to the cytosol. In terms of biological role, exerts an anti-apoptotic effect in the immune system and is involved in responses to infections. The chain is GTPase IMAP family member 8 (Gimap8) from Mus musculus (Mouse).